The chain runs to 410 residues: Arginine deiminase (410 aa).

Residue Cys400 is the Amidino-cysteine intermediate of the active site.

It belongs to the arginine deiminase family.

Its subcellular location is the cytoplasm. The enzyme catalyses L-arginine + H2O = L-citrulline + NH4(+). It functions in the pathway amino-acid degradation; L-arginine degradation via ADI pathway; carbamoyl phosphate from L-arginine: step 1/2. The protein is Arginine deiminase (arcA) of Lactococcus lactis subsp. lactis (strain IL1403) (Streptococcus lactis).